We begin with the raw amino-acid sequence, 191 residues long: Neuronal calcium sensor 1 (191 aa).

Gly-2 carries the N-myristoyl glycine lipid modification. EF-hand domains lie at 24-59, 60-95, 96-131, and 144-179; these read ESEI…FPFG, DPSK…TSRG, TVEE…IYRM, and TPEK…DPTI. Ca(2+) is bound by residues Asp-73, Asn-75, Asp-77, Glu-84, Asp-109, Asp-111, Asp-113, Tyr-115, Glu-120, Asp-157, Asn-159, Asp-161, Gln-163, and Glu-168.

The protein belongs to the recoverin family.

It localises to the perikaryon. The protein localises to the cell projection. It is found in the growth cone. In terms of biological role, neuronal calcium sensor, regulator of G protein-coupled receptor phosphorylation in a calcium dependent manner. Regulates neurite extension and branching by activity-dependent Ca(2+) influx in growth cones. This is Neuronal calcium sensor 1 from Lymnaea stagnalis (Great pond snail).